The chain runs to 595 residues: uncharacterized protein (595 aa).

Transmembrane regions (helical) follow at residues 64 to 84, 86 to 106, 239 to 259, 281 to 301, 334 to 354, 368 to 388, 504 to 524, 547 to 567, and 571 to 591; these read VVFL…LIVF, IFYA…IGVL, FYVI…PVAS, FYLW…GILP, VHFI…LFFI, MFGI…HFII, FIYV…SYIM, YLFQ…GILT, and IIAG…LFKF.

To M.jannaschii FlaJ.

The protein resides in the cell membrane. This is an uncharacterized protein from Methanocaldococcus jannaschii (strain ATCC 43067 / DSM 2661 / JAL-1 / JCM 10045 / NBRC 100440) (Methanococcus jannaschii).